Reading from the N-terminus, the 673-residue chain is Potassium-transporting ATPase ATP-binding subunit (673 aa).

A run of 4 helical transmembrane segments spans residues 34–54 (IMFV…YPDL), 65–85 (VFSI…SEAL), 216–236 (IALF…ILTM), and 253–273 (IALA…AIGI). The active-site 4-aspartylphosphate intermediate is Asp304. ATP-binding positions include Asp341, Glu345, 370 to 377 (FTAETRMS), and Lys388. 2 residues coordinate Mg(2+): Asp511 and Asp515. The next 3 helical transmembrane spans lie at 581 to 601 (FAIL…LNIM), 609 to 629 (AVLS…PIAM), and 649 to 669 (VYGL…DLII).

This sequence belongs to the cation transport ATPase (P-type) (TC 3.A.3) family. Type IA subfamily. The system is composed of three essential subunits: KdpA, KdpB and KdpC.

The protein localises to the cell membrane. It catalyses the reaction K(+)(out) + ATP + H2O = K(+)(in) + ADP + phosphate + H(+). Part of the high-affinity ATP-driven potassium transport (or Kdp) system, which catalyzes the hydrolysis of ATP coupled with the electrogenic transport of potassium into the cytoplasm. This subunit is responsible for energy coupling to the transport system and for the release of the potassium ions to the cytoplasm. This chain is Potassium-transporting ATPase ATP-binding subunit, found in Staphylococcus epidermidis (strain ATCC 35984 / DSM 28319 / BCRC 17069 / CCUG 31568 / BM 3577 / RP62A).